The primary structure comprises 465 residues: Argininosuccinate lyase (465 aa).

The protein belongs to the lyase 1 family. Argininosuccinate lyase subfamily.

Its subcellular location is the cytoplasm. It catalyses the reaction 2-(N(omega)-L-arginino)succinate = fumarate + L-arginine. It functions in the pathway amino-acid biosynthesis; L-arginine biosynthesis; L-arginine from L-ornithine and carbamoyl phosphate: step 3/3. This Clostridium botulinum (strain Alaska E43 / Type E3) protein is Argininosuccinate lyase.